The sequence spans 424 residues: Glutamyl-tRNA reductase (424 aa).

Substrate is bound by residues 49–52 (TCNR), Ser105, 110–112 (EPQ), and Gln116. Residue Cys50 is the Nucleophile of the active site. NADP(+) is bound at residue 185 to 190 (GSGETA).

Belongs to the glutamyl-tRNA reductase family. Homodimer.

It carries out the reaction (S)-4-amino-5-oxopentanoate + tRNA(Glu) + NADP(+) = L-glutamyl-tRNA(Glu) + NADPH + H(+). It participates in porphyrin-containing compound metabolism; protoporphyrin-IX biosynthesis; 5-aminolevulinate from L-glutamyl-tRNA(Glu): step 1/2. Its function is as follows. Catalyzes the NADPH-dependent reduction of glutamyl-tRNA(Glu) to glutamate 1-semialdehyde (GSA). In Legionella pneumophila (strain Paris), this protein is Glutamyl-tRNA reductase.